A 339-amino-acid chain; its full sequence is GTP 3',8-cyclase (339 aa).

Residues 13 to 249 (RYGRPLRDLR…GEVAQRHAFA (237 aa)) form the Radical SAM core domain. Arg22 provides a ligand contact to GTP. 2 residues coordinate [4Fe-4S] cluster: Cys29 and Cys33. Tyr35 is a binding site for S-adenosyl-L-methionine. Cys36 contacts [4Fe-4S] cluster. GTP is bound at residue Arg75. Gly79 serves as a coordination point for S-adenosyl-L-methionine. Thr106 serves as a coordination point for GTP. Ser130 serves as a coordination point for S-adenosyl-L-methionine. Lys168 lines the GTP pocket. Met202 provides a ligand contact to S-adenosyl-L-methionine. Positions 266 and 269 each coordinate [4Fe-4S] cluster. Residue 271 to 273 (RAR) participates in GTP binding. Cys283 lines the [4Fe-4S] cluster pocket.

The protein belongs to the radical SAM superfamily. MoaA family. As to quaternary structure, monomer and homodimer. The cofactor is [4Fe-4S] cluster.

The catalysed reaction is GTP + AH2 + S-adenosyl-L-methionine = (8S)-3',8-cyclo-7,8-dihydroguanosine 5'-triphosphate + 5'-deoxyadenosine + L-methionine + A + H(+). The protein operates within cofactor biosynthesis; molybdopterin biosynthesis. Its function is as follows. Catalyzes the cyclization of GTP to (8S)-3',8-cyclo-7,8-dihydroguanosine 5'-triphosphate. This is GTP 3',8-cyclase from Xanthomonas campestris pv. campestris (strain B100).